Here is a 615-residue protein sequence, read N- to C-terminus: Elongation factor 4 (615 aa).

Positions 14–200 (ARIRNFCIIA…KVVELIPAPT (187 aa)) constitute a tr-type G domain. GTP-binding positions include 26–31 (DHGKST) and 147–150 (NKID).

Belongs to the TRAFAC class translation factor GTPase superfamily. Classic translation factor GTPase family. LepA subfamily.

Its subcellular location is the cell membrane. It catalyses the reaction GTP + H2O = GDP + phosphate + H(+). Functionally, required for accurate and efficient protein synthesis under certain stress conditions. May act as a fidelity factor of the translation reaction, by catalyzing a one-codon backward translocation of tRNAs on improperly translocated ribosomes. Back-translocation proceeds from a post-translocation (POST) complex to a pre-translocation (PRE) complex, thus giving elongation factor G a second chance to translocate the tRNAs correctly. Binds to ribosomes in a GTP-dependent manner. The chain is Elongation factor 4 from Corynebacterium glutamicum (strain ATCC 13032 / DSM 20300 / JCM 1318 / BCRC 11384 / CCUG 27702 / LMG 3730 / NBRC 12168 / NCIMB 10025 / NRRL B-2784 / 534).